The primary structure comprises 342 residues: 3-isopropylmalate dehydrogenase (342 aa).

Positions 92, 102, 126, and 216 each coordinate substrate. Mg(2+)-binding residues include Asp-216, Asp-240, and Asp-244. Residue 276–288 (GSAPDIAGKGIAD) coordinates NAD(+).

It belongs to the isocitrate and isopropylmalate dehydrogenases family. LeuB type 2 subfamily. In terms of assembly, homodimer. The cofactor is Mg(2+). It depends on Mn(2+) as a cofactor.

It is found in the cytoplasm. It catalyses the reaction (2R,3S)-3-isopropylmalate + NAD(+) = 4-methyl-2-oxopentanoate + CO2 + NADH. It participates in amino-acid biosynthesis; L-leucine biosynthesis; L-leucine from 3-methyl-2-oxobutanoate: step 3/4. Its function is as follows. Catalyzes the oxidation of 3-carboxy-2-hydroxy-4-methylpentanoate (3-isopropylmalate) to 3-carboxy-4-methyl-2-oxopentanoate. The product decarboxylates to 4-methyl-2 oxopentanoate. The chain is 3-isopropylmalate dehydrogenase from Corynebacterium kroppenstedtii (strain DSM 44385 / JCM 11950 / CIP 105744 / CCUG 35717).